The following is a 473-amino-acid chain: Cysteine--tRNA ligase (473 aa).

Cysteine 28 lines the Zn(2+) pocket. The 'HIGH' region signature appears at 30 to 40; the sequence is MTVYDFCHIGH. The Zn(2+) site is built by cysteine 212, histidine 237, and glutamate 241. The 'KMSKS' region motif lies at 277 to 281; the sequence is KMSKS. Residue lysine 280 participates in ATP binding.

This sequence belongs to the class-I aminoacyl-tRNA synthetase family. Monomer. It depends on Zn(2+) as a cofactor.

It is found in the cytoplasm. The enzyme catalyses tRNA(Cys) + L-cysteine + ATP = L-cysteinyl-tRNA(Cys) + AMP + diphosphate. The chain is Cysteine--tRNA ligase from Polynucleobacter necessarius subsp. necessarius (strain STIR1).